Here is a 61-residue protein sequence, read N- to C-terminus: Small ribosomal subunit protein uS14 (61 aa).

4 residues coordinate Zn(2+): Cys24, Cys27, Cys40, and Cys43.

Belongs to the universal ribosomal protein uS14 family. Zinc-binding uS14 subfamily. In terms of assembly, part of the 30S ribosomal subunit. Contacts proteins S3 and S10. Requires Zn(2+) as cofactor.

In terms of biological role, binds 16S rRNA, required for the assembly of 30S particles and may also be responsible for determining the conformation of the 16S rRNA at the A site. The chain is Small ribosomal subunit protein uS14 from Dehalococcoides mccartyi (strain ATCC BAA-2266 / KCTC 15142 / 195) (Dehalococcoides ethenogenes (strain 195)).